Consider the following 114-residue polypeptide: Notch-regulated ankyrin repeat-containing protein (114 aa).

2 ANK repeats span residues 50–79 and 83–112; these read EGQT…DIRL and DGWS…YSSS.

Belongs to the NRARP family. Forms a ternary complex with the intracellular domain (ICD) of notch1 and rbpj/suh.

Functionally, promotes loss of intracellular domain (ICD) of Notch1 in embryos. By down-regulating ICD levels, could function as a negative feedback regulator of Notch signaling that attenuates ICD-mediated transcription. Involved in angiogenesis. May be involved in somitogenesis. This Xenopus tropicalis (Western clawed frog) protein is Notch-regulated ankyrin repeat-containing protein (nrarp).